The following is a 551-amino-acid chain: MSPKSVPDIGDVLARQAEDIDTRYHPSAALRRQLNKVFPTHWSFLLGEIALYSFIVLLLTGVYLTLFFDPSMTDVTYNGVYQPLRGVEMSRAYQSTLDISFEVRGGLFVRQIHHWAALMFTAAIMVHLARIFFTGAFRRPRETNWVIGSLLLILAMFEGYFGYSMPDDLLSGIGLRAALSSITLGIPVIGTWLHWALFGGDFPGTILIPRLYALHILLIPGVILALIGLHLALVWFQKHTQFPGPGRTEYNVVGVRVMPVFAFKSGAFFAAIVGVLGLMGGFLQINPIWNLGPYKPSQVSAGSQPDFYMMWTEGLARIWPAWEFYFWHHTIPAPVWVAVIMALVFVLLITYPFLEKRFTGDYAHHNLLQRPRDVPVRTSIGAMAITFYMVLTLAAMNDIIALKFHISLNATTWIGRIGMVILPLLVYFITYRWCIGLQRSDRAVLEHGIETGIIKRLPHGAYIELHQPLGPVDDHGHPIPLEYQGTAVPKRMNKLGSAGSPSSGSFLFADPVSEDAALREATHVAEQRALTALREHQDSIASSPNGERGKH.

The chain crosses the membrane as a helical span at residues 44 to 64 (FLLGEIALYSFIVLLLTGVYL). 2 residues coordinate heme: His113 and His127. 3 consecutive transmembrane segments (helical) span residues 117–137 (ALMFTAAIMVHLARIFFTGAF), 145–165 (WVIGSLLLILAMFEGYFGYSM), and 188–208 (VIGTWLHWALFGGDFPGTILI). Heme is bound by residues His215 and His230. 5 consecutive transmembrane segments (helical) span residues 216-236 (ILLIPGVILALIGLHLALVWF), 265-285 (SGAFFAAIVGVLGLMGGFLQI), 334-354 (PVWVAVIMALVFVLLITYPFL), 380-400 (IGAMAITFYMVLTLAAMNDII), and 417-437 (IGMVILPLLVYFITYRWCIGL). A disordered region spans residues 532 to 551 (ALREHQDSIASSPNGERGKH).

This sequence belongs to the cytochrome b family. In terms of assembly, the cytochrome bc1 complex is composed of a cytochrome b (QcrB), the Rieske iron-sulfur protein (QcrA) and a diheme cytochrome c (QcrC) subunit. Heme is required as a cofactor.

It is found in the cell membrane. The catalysed reaction is a quinol + 2 Fe(III)-[cytochrome c](out) = a quinone + 2 Fe(II)-[cytochrome c](out) + 2 H(+)(out). In terms of biological role, cytochrome b subunit of the cytochrome bc1 complex, an essential component of the respiratory electron transport chain required for ATP synthesis. The bc1 complex catalyzes the oxidation of ubiquinol and the reduction of cytochrome c in the respiratory chain. The bc1 complex operates through a Q-cycle mechanism that couples electron transfer to generation of the proton gradient that drives ATP synthesis. The cytochrome b subunit contains two ubiquinol reactive sites: the oxidation (QP) site and the reduction (QN) site. This is Cytochrome bc1 complex cytochrome b subunit (qcrB) from Mycobacterium leprae (strain TN).